Here is a 198-residue protein sequence, read N- to C-terminus: Recombination protein RecR (198 aa).

A C4-type zinc finger spans residues 57 to 72 (CSVCGHITDKDPCYIC). The region spanning 80–175 (SVICVVQESK…KVTRIAHGLP (96 aa)) is the Toprim domain.

The protein belongs to the RecR family.

Functionally, may play a role in DNA repair. It seems to be involved in an RecBC-independent recombinational process of DNA repair. It may act with RecF and RecO. This chain is Recombination protein RecR, found in Listeria welshimeri serovar 6b (strain ATCC 35897 / DSM 20650 / CCUG 15529 / CIP 8149 / NCTC 11857 / SLCC 5334 / V8).